A 519-amino-acid polypeptide reads, in one-letter code: MFLLPLPAAARVAVRQLSVRRFWGPGPDAANMTKGLVLGIYSKEKEDDAPQFTSAGENFDKLVSGKLREILNISGPPLKAGKTRTFYGLHEDFSSVVVVGLGKKGAGVDDQENWHEGKENIRAAVAAGCRQIQDLEIPSVEVDPCGDAQAAAEGAVLGLYEYDELKQKKKVVVSAKLHGSGDQEAWQRGVLFASGQNLARHLMETPANEMTPTRFAEVIEKNLKSASSKTDVHIRPKSWIEEQEMGSFLSVAKGSEEPPVFLEIHYKGSPDASDPPLVFVGKGITFDSGGISIKASANMDLMRADMGGAATICSTIVSAAKLDLPINLVGLAPLCENMPSGKANKPGDVVRAKNGKTIQVDNTDAEGRLILADALCYAHTFNPKVIINAATLTGAMDIALGSGATGVFTNSSWLWNKLFEASIETGDRVWRMPLFEHYTKQIVDCQLADVNNIGKYRSAGACTAAAFLKEFVTHPKWAHLDIAGVMTNKDEVPYLRKGMAGRPTRTLIEFLLRFSQDSA.

Position 42 is a phosphoserine (S42). K45 is modified (N6-succinyllysine). S54 is subject to Phosphoserine. Residues K61 and K103 each carry the N6-succinyllysine modification. Phosphoserine occurs at positions 180 and 194. Residues L202, M203, and T205 each coordinate Zn(2+). Position 221 is an N6-acetyllysine; alternate (K221). N6-succinyllysine; alternate is present on K221. At S238 the chain carries Phosphoserine. Residues K282 and D287 each coordinate Zn(2+). Positions 282, 287, 292, and 294 each coordinate substrate. D287 contacts Mg(2+). K294 is a catalytic residue. R303, D305, D364, and E366 together coordinate Zn(2+). The substrate site is built by D305 and D364. D364 and E366 together coordinate Mg(2+). R368 is a catalytic residue. K455 is modified (N6-acetyllysine; alternate). An N6-succinyllysine; alternate modification is found at K455. An N6-succinyllysine modification is found at K476. Residue K489 is modified to N6-acetyllysine; alternate. Position 489 is an N6-succinyllysine; alternate (K489).

Belongs to the peptidase M17 family. Homohexamer. Zn(2+) serves as cofactor. The cofactor is Mn(2+).

The protein resides in the cytoplasm. The catalysed reaction is Release of an N-terminal amino acid, Xaa-|-Yaa-, in which Xaa is preferably Leu, but may be other amino acids including Pro although not Arg or Lys, and Yaa may be Pro. Amino acid amides and methyl esters are also readily hydrolyzed, but rates on arylamides are exceedingly low.. It catalyses the reaction an S-substituted L-cysteinylglycine + H2O = an S-substituted L-cysteine + glycine. The enzyme catalyses L-cysteinylglycine + H2O = L-cysteine + glycine. It carries out the reaction S-benzyl-L-cysteinylglycine + H2O = S-benzyl-L-cysteine + glycine. The catalysed reaction is Release of N-terminal proline from a peptide.. Functionally, cytosolic metallopeptidase that catalyzes the removal of unsubstituted N-terminal hydrophobic amino acids from various peptides. The presence of Zn(2+) ions is essential for the peptidase activity, and the association with other cofactors can modulate the substrate spectificity of the enzyme. For instance, in the presence of Mn(2+), it displays a specific Cys-Gly hydrolyzing activity of Cys-Gly-S-conjugates. Involved in the metabolism of glutathione and in the degradation of glutathione S-conjugates, which may play a role in the control of the cell redox status. This is Cytosol aminopeptidase from Sus scrofa (Pig).